Reading from the N-terminus, the 351-residue chain is E3 ubiquitin-protein ligase TRIM63 (351 aa).

The RING-type zinc finger occupies 23 to 79 (CPICLEMFTKPVVILPCQHNLCRKCANDIFQAANPYWTNRGGSVSMSGGRFRCPSCR). The segment at 74 to 218 (RCPSCRHEVI…LSHKFDALYA (145 aa)) is interaction with TTN. A B box-type zinc finger spans residues 117–159 (GSHPMCKEHEDEKINIYCLTCEVPTCSLCKVFGAHQACEVAPL). The Zn(2+) site is built by cysteine 122, histidine 125, cysteine 145, and histidine 151. The stretch at 189-269 (SQLEDSCRVT…VETAIQSLDE (81 aa)) forms a coiled coil. One can recognise a COS domain in the interval 267–325 (LDEPGGATFLLSAKPLIKSIVEASKGCQLGKTEQGFENMDYFTLNLEHIAEALRAIDFG). The segment covering 326 to 345 (TDEEEEFTEEEEEEDQEEGV) has biased composition (acidic residues). The interval 326–351 (TDEEEEFTEEEEEEDQEEGVSTEGHQ) is disordered.

In terms of assembly, homodimer. Homooligomer and heterooligomer. Interacts with SUMO2, titin/TTN and GMEB1. Interacts with TRIM54 and probably with TRIM55 and TNNI3. Forms a ternary complex with RACK1 and PRKCE. Interacts with CKM. As to expression, muscle specific. Selectively expressed in heart and skeletal muscle.

Its subcellular location is the cytoplasm. It is found in the nucleus. It localises to the myofibril. The protein resides in the sarcomere. The protein localises to the m line. Its subcellular location is the z line. It carries out the reaction S-ubiquitinyl-[E2 ubiquitin-conjugating enzyme]-L-cysteine + [acceptor protein]-L-lysine = [E2 ubiquitin-conjugating enzyme]-L-cysteine + N(6)-ubiquitinyl-[acceptor protein]-L-lysine.. The protein operates within protein modification; protein ubiquitination. Its function is as follows. E3 ubiquitin ligase. Mediates the ubiquitination and subsequent proteasomal degradation of CKM, GMEB1 and HIBADH. Regulates the proteasomal degradation of muscle proteins under amino acid starvation, where muscle protein is catabolized to provide other organs with amino acids. Inhibits de novo skeletal muscle protein synthesis under amino acid starvation. Regulates proteasomal degradation of cardiac troponin I/TNNI3 and probably of other sarcomeric-associated proteins. May play a role in striated muscle atrophy and hypertrophy by regulating an anti-hypertrophic PKC-mediated signaling pathway. May regulate the organization of myofibrils through TTN in muscle cells. The chain is E3 ubiquitin-protein ligase TRIM63 (Trim63) from Rattus norvegicus (Rat).